Reading from the N-terminus, the 132-residue chain is Small ribosomal subunit protein uS8 (132 aa).

It belongs to the universal ribosomal protein uS8 family. Part of the 30S ribosomal subunit. Contacts proteins S5 and S12.

One of the primary rRNA binding proteins, it binds directly to 16S rRNA central domain where it helps coordinate assembly of the platform of the 30S subunit. This chain is Small ribosomal subunit protein uS8, found in Streptococcus agalactiae serotype V (strain ATCC BAA-611 / 2603 V/R).